Consider the following 592-residue polypeptide: Arginine--tRNA ligase (592 aa).

Positions 134 to 144 (ANPTGPLHVGH) match the 'HIGH' region motif.

It belongs to the class-I aminoacyl-tRNA synthetase family. Monomer.

It is found in the cytoplasm. The enzyme catalyses tRNA(Arg) + L-arginine + ATP = L-arginyl-tRNA(Arg) + AMP + diphosphate. This Coxiella burnetii (strain CbuK_Q154) (Coxiella burnetii (strain Q154)) protein is Arginine--tRNA ligase.